A 159-amino-acid polypeptide reads, in one-letter code: NAD(P)H-quinone oxidoreductase subunit J, chloroplastic (159 aa).

This sequence belongs to the complex I 30 kDa subunit family. As to quaternary structure, NDH is composed of at least 16 different subunits, 5 of which are encoded in the nucleus.

It localises to the plastid. The protein localises to the chloroplast thylakoid membrane. It carries out the reaction a plastoquinone + NADH + (n+1) H(+)(in) = a plastoquinol + NAD(+) + n H(+)(out). The enzyme catalyses a plastoquinone + NADPH + (n+1) H(+)(in) = a plastoquinol + NADP(+) + n H(+)(out). Its function is as follows. NDH shuttles electrons from NAD(P)H:plastoquinone, via FMN and iron-sulfur (Fe-S) centers, to quinones in the photosynthetic chain and possibly in a chloroplast respiratory chain. The immediate electron acceptor for the enzyme in this species is believed to be plastoquinone. Couples the redox reaction to proton translocation, and thus conserves the redox energy in a proton gradient. The chain is NAD(P)H-quinone oxidoreductase subunit J, chloroplastic from Oryza nivara (Indian wild rice).